The sequence spans 127 residues: Small ribosomal subunit protein uS13 (127 aa).

The disordered stretch occupies residues 97–127 (PVRGQRTKTNARTRKGPRKTVAGKKGVKDLR). The segment covering 101-118 (QRTKTNARTRKGPRKTVA) has biased composition (basic residues).

The protein belongs to the universal ribosomal protein uS13 family. In terms of assembly, part of the 30S ribosomal subunit. Forms a loose heterodimer with protein S19. Forms two bridges to the 50S subunit in the 70S ribosome.

Its function is as follows. Located at the top of the head of the 30S subunit, it contacts several helices of the 16S rRNA. In the 70S ribosome it contacts the 23S rRNA (bridge B1a) and protein L5 of the 50S subunit (bridge B1b), connecting the 2 subunits; these bridges are implicated in subunit movement. Contacts the tRNAs in the A and P-sites. The protein is Small ribosomal subunit protein uS13 of Rhodopirellula baltica (strain DSM 10527 / NCIMB 13988 / SH1).